Here is a 956-residue protein sequence, read N- to C-terminus: Netrin receptor UNC5D (956 aa).

An N-terminal signal peptide occupies residues 1–30; the sequence is MGTGAADGSRGARRWLPWLGLFFWAAGAAA. At 31-382 the chain is on the extracellular side; sequence ARGADGSEIL…SRRGIENASD (352 aa). The Ig-like domain occupies 52–149; that stretch reads PHFIEEPEDA…LGTSKSRKAS (98 aa). 9 cysteine pairs are disulfide-bonded: cysteine 73/cysteine 134, cysteine 85/cysteine 132, cysteine 178/cysteine 229, cysteine 262/cysteine 299, cysteine 266/cysteine 303, cysteine 277/cysteine 289, cysteine 318/cysteine 352, cysteine 322/cysteine 357, and cysteine 330/cysteine 342. The segment at 89–91 is important for interaction with FLRT2; that stretch reads WVH. Asparagine 115 and asparagine 226 each carry an N-linked (GlcNAc...) asparagine glycan. Positions 151 to 242 constitute an Ig-like C2-type domain; the sequence is RIAYLRKNFE…NIVAKRRSLS (92 aa). TSP type-1 domains follow at residues 250 to 304 and 306 to 358; these read NGGW…ALCP and DGSW…GLCI. Asparagine 351 and asparagine 379 each carry an N-linked (GlcNAc...) asparagine glycan. Residues 383–403 traverse the membrane as a helical segment; the sequence is IALYSGLGAAVVAVAVLVIGV. Residues 404-956 are Cytoplasmic-facing; that stretch reads TLYRRSHSDY…DFNYSRQNGL (553 aa). Residues 545 to 685 form the ZU5 domain; sequence LRTTGVFGHL…FGTYALTGEP (141 aa). The region spanning 862–939 is the Death domain; that stretch reads QRICATFDTP…RTHTKLSNIT (78 aa).

Belongs to the unc-5 family. In terms of assembly, interacts (via extracellular domain) with FLRT2 and FLRT3 (via extracellular domain); the interaction is direct. Has higher affinity for FLRT2. Identified in a complex with FLRT3 and ADGRL3; does not interact with ADGRL3 by itself. Proteolytically cleaved by caspases during apoptosis. The cleavage does not take place when the receptor is associated with netrin ligand. Its cleavage by caspases is required to induce apoptosis. Detected in multipolar cells in the brain subventricular zone (at protein level). Detected in embryonic brain neocortex, especially in the subventricular zone. Detected in multipolar cells in the brain subventricular zone. Detected in brain neocortex from young pups, especially in the somatosensory cortex. Expressed in developing limb and mammary gland.

The protein localises to the cell membrane. Its function is as follows. Receptor for the netrin NTN4 that promotes neuronal cell survival. Plays a role in cell-cell adhesion and cell guidance. Receptor for netrin involved in cell migration. Plays a role in the regulation of neuronal cell migration in the developing brain via its interaction with FLRT2. Plays a role in axon guidance by mediating axon repulsion of neuronal growth cones in the developing nervous system upon ligand binding. May play a role in apoptosis in response to DNA damage. It also acts as a dependence receptor required for apoptosis induction when not associated with netrin ligand. Mediates cell-cell adhesion via its interaction with FLRT3 on an adjacent cell. This is Netrin receptor UNC5D (Unc5d) from Mus musculus (Mouse).